A 218-amino-acid polypeptide reads, in one-letter code: Large ribosomal subunit protein uL4 (218 aa).

The disordered stretch occupies residues 54–106 (GTHAVKNRGAVSGGGRKPWKQKGTGRARQGSIRAPQWYHGGVAHGPVPRDYSQ).

Belongs to the universal ribosomal protein uL4 family. In terms of assembly, part of the 50S ribosomal subunit.

Functionally, one of the primary rRNA binding proteins, this protein initially binds near the 5'-end of the 23S rRNA. It is important during the early stages of 50S assembly. It makes multiple contacts with different domains of the 23S rRNA in the assembled 50S subunit and ribosome. In terms of biological role, forms part of the polypeptide exit tunnel. In Bifidobacterium animalis subsp. lactis (strain AD011), this protein is Large ribosomal subunit protein uL4.